A 294-amino-acid chain; its full sequence is Thymidylate synthase 1/2 (294 aa).

DUMP-binding positions include Arg-29 and Arg-154–Arg-155. The active-site Nucleophile is Cys-174. DUMP contacts are provided by residues Arg-194 to Asp-197, Asn-205, and His-235 to Tyr-237. Asp-197 lines the (6R)-5,10-methylene-5,6,7,8-tetrahydrofolate pocket.

Belongs to the thymidylate synthase family.

The enzyme catalyses dUMP + (6R)-5,10-methylene-5,6,7,8-tetrahydrofolate = 7,8-dihydrofolate + dTMP. It participates in pyrimidine metabolism; dTTP biosynthesis. This is Thymidylate synthase 1/2 (TS-1) from Encephalitozoon cuniculi (strain GB-M1) (Microsporidian parasite).